Reading from the N-terminus, the 216-residue chain is 3-isopropylmalate dehydratase small subunit (216 aa).

Belongs to the LeuD family. LeuD type 1 subfamily. In terms of assembly, heterodimer of LeuC and LeuD.

The enzyme catalyses (2R,3S)-3-isopropylmalate = (2S)-2-isopropylmalate. Its pathway is amino-acid biosynthesis; L-leucine biosynthesis; L-leucine from 3-methyl-2-oxobutanoate: step 2/4. Functionally, catalyzes the isomerization between 2-isopropylmalate and 3-isopropylmalate, via the formation of 2-isopropylmaleate. This chain is 3-isopropylmalate dehydratase small subunit, found in Burkholderia ambifaria (strain MC40-6).